The primary structure comprises 366 residues: Chorismate synthase (366 aa).

Positions 48 and 54 each coordinate NADP(+). Residues 125–127, 238–239, G278, 293–297, and R319 contribute to the FMN site; these read RSS, NA, and KPTSS.

This sequence belongs to the chorismate synthase family. In terms of assembly, homotetramer. Requires FMNH2 as cofactor.

It catalyses the reaction 5-O-(1-carboxyvinyl)-3-phosphoshikimate = chorismate + phosphate. The protein operates within metabolic intermediate biosynthesis; chorismate biosynthesis; chorismate from D-erythrose 4-phosphate and phosphoenolpyruvate: step 7/7. Functionally, catalyzes the anti-1,4-elimination of the C-3 phosphate and the C-6 proR hydrogen from 5-enolpyruvylshikimate-3-phosphate (EPSP) to yield chorismate, which is the branch point compound that serves as the starting substrate for the three terminal pathways of aromatic amino acid biosynthesis. This reaction introduces a second double bond into the aromatic ring system. This is Chorismate synthase from Burkholderia vietnamiensis (strain G4 / LMG 22486) (Burkholderia cepacia (strain R1808)).